Here is a 516-residue protein sequence, read N- to C-terminus: Katanin p60 ATPase-containing subunit A1 (516 aa).

The interval 75–212 (GFKSEPAAPE…DEKKFDPAGY (138 aa)) is disordered. Basic and acidic residues-rich tracts occupy residues 133 to 143 (ARKDPPRRSEP) and 155 to 167 (RGGR…RGDA). Over residues 168–178 (RSGGGGRGGAR) the composition is skewed to gly residues. Residues 179 to 212 (GSDKDKNRGGKSDKDKKAPSGEEGDEKKFDPAGY) are compositionally biased toward basic and acidic residues. Position 274–281 (274–281 (GPPGTGKT)) interacts with ATP.

It belongs to the AAA ATPase family. Katanin p60 subunit A1 subfamily. As to quaternary structure, can homooligomerize into hexameric rings, which may be promoted by interaction with microtubules. Interacts with KATNB1, which may serve as a targeting subunit.

It localises to the cytoplasm. The protein localises to the cytoskeleton. It is found in the microtubule organizing center. The protein resides in the centrosome. Its subcellular location is the spindle pole. It carries out the reaction n ATP + n H2O + a microtubule = n ADP + n phosphate + (n+1) alpha/beta tubulin heterodimers.. Its activity is regulated as follows. ATPase activity is stimulated by microtubules, which promote homooligomerization. ATP-dependent microtubule severing is stimulated by interaction with KATNB1. In terms of biological role, catalytic subunit of a complex which severs microtubules in an ATP-dependent manner. Microtubule severing may promote rapid reorganization of cellular microtubule arrays and the release of microtubules from the centrosome following nucleation. In mitotic spindles this could allow depolymerization of the microtubule end proximal to the centrosome, and subsequent poleward microtubule flux. The protein is Katanin p60 ATPase-containing subunit A1 of Strongylocentrotus purpuratus (Purple sea urchin).